A 193-amino-acid polypeptide reads, in one-letter code: LOB domain-containing protein 12 (193 aa).

The 102-residue stretch at 7 to 108 (SPCASCKLLR…MQLAVAQAEI (102 aa)) folds into the LOB domain.

It belongs to the LOB domain-containing protein family. Expressed predominantly in roots, and at low levels in shoots, floral stems and open flowers.

This chain is LOB domain-containing protein 12 (LBD12), found in Arabidopsis thaliana (Mouse-ear cress).